A 411-amino-acid polypeptide reads, in one-letter code: LL-diaminopimelate aminotransferase 1 (411 aa).

Substrate is bound by residues Y15 and G42. Residues Y72, 108 to 109 (SK), Y132, N187, Y218, and 246 to 248 (SFS) contribute to the pyridoxal 5'-phosphate site. K109, Y132, and N187 together coordinate substrate. K249 bears the N6-(pyridoxal phosphate)lysine mark. Residues R257 and N292 each coordinate pyridoxal 5'-phosphate. Substrate contacts are provided by N292 and R388.

This sequence belongs to the class-I pyridoxal-phosphate-dependent aminotransferase family. LL-diaminopimelate aminotransferase subfamily. In terms of assembly, homodimer. The cofactor is pyridoxal 5'-phosphate.

The catalysed reaction is (2S,6S)-2,6-diaminopimelate + 2-oxoglutarate = (S)-2,3,4,5-tetrahydrodipicolinate + L-glutamate + H2O + H(+). The protein operates within amino-acid biosynthesis; L-lysine biosynthesis via DAP pathway; LL-2,6-diaminopimelate from (S)-tetrahydrodipicolinate (aminotransferase route): step 1/1. Its function is as follows. Involved in the synthesis of meso-diaminopimelate (m-DAP or DL-DAP), required for both lysine and peptidoglycan biosynthesis. Catalyzes the direct conversion of tetrahydrodipicolinate to LL-diaminopimelate. This chain is LL-diaminopimelate aminotransferase 1, found in Nostoc sp. (strain PCC 7120 / SAG 25.82 / UTEX 2576).